The chain runs to 140 residues: Putative septation protein SpoVG (140 aa).

Positions 88–127 (VAPQAGGLQGAEEPTAVEPAPQLQDESELPWEPGDDGEGA) are disordered. The span at 112-124 (DESELPWEPGDDG) shows a compositional bias: acidic residues.

This sequence belongs to the SpoVG family.

Its function is as follows. Could be involved in septation. This Symbiobacterium thermophilum (strain DSM 24528 / JCM 14929 / IAM 14863 / T) protein is Putative septation protein SpoVG.